A 231-amino-acid polypeptide reads, in one-letter code: 5'-methylthioadenosine/S-adenosylhomocysteine nucleosidase (231 aa).

Glu-12 acts as the Proton acceptor in catalysis. Substrate-binding positions include Gly-78, Met-153, and 174–175; that span reads ME. The Proton donor role is filled by Asp-198.

The protein belongs to the PNP/UDP phosphorylase family. MtnN subfamily.

It catalyses the reaction S-adenosyl-L-homocysteine + H2O = S-(5-deoxy-D-ribos-5-yl)-L-homocysteine + adenine. It carries out the reaction S-methyl-5'-thioadenosine + H2O = 5-(methylsulfanyl)-D-ribose + adenine. The catalysed reaction is 5'-deoxyadenosine + H2O = 5-deoxy-D-ribose + adenine. It functions in the pathway amino-acid biosynthesis; L-methionine biosynthesis via salvage pathway; S-methyl-5-thio-alpha-D-ribose 1-phosphate from S-methyl-5'-thioadenosine (hydrolase route): step 1/2. Its function is as follows. Catalyzes the irreversible cleavage of the glycosidic bond in both 5'-methylthioadenosine (MTA) and S-adenosylhomocysteine (SAH/AdoHcy) to adenine and the corresponding thioribose, 5'-methylthioribose and S-ribosylhomocysteine, respectively. Also cleaves 5'-deoxyadenosine, a toxic by-product of radical S-adenosylmethionine (SAM) enzymes, into 5-deoxyribose and adenine. The polypeptide is 5'-methylthioadenosine/S-adenosylhomocysteine nucleosidase (Bacillus subtilis (strain 168)).